The chain runs to 290 residues: Sodium/potassium-transporting ATPase subunit beta-2 (290 aa).

At 1 to 39 the chain is on the cytoplasmic side; the sequence is MVIQKEKKSCGQVVEEWKEFVWNPRTHQFMGRTGTSWAF. A helical; Signal-anchor for type II membrane protein transmembrane segment spans residues 40–67; the sequence is ILLFYLVFYGFLTAMFTLTMWVMLQTVS. At 68-290 the chain is on the extracellular side; it reads DHTPKYQDRL…VAFKLRINKT (223 aa). N-linked (GlcNAc...) asparagine glycans are attached at residues Asn96 and Asn118. Cysteines 129 and 150 form a disulfide. N-linked (GlcNAc...) asparagine glycosylation is found at Asn153 and Asn159. A disulfide bridge connects residues Cys160 and Cys177. 3 N-linked (GlcNAc...) asparagine glycosylation sites follow: Asn193, Asn197, and Asn238. The tract at residues 193–290 is immunoglobulin-like; that stretch reads NQSMNVTCAG…VAFKLRINKT (98 aa). An intrachain disulfide couples Cys200 to Cys261.

Belongs to the X(+)/potassium ATPases subunit beta family. As to quaternary structure, the sodium/potassium-transporting ATPase is composed of a catalytic alpha subunit, an auxiliary non-catalytic beta subunit and an additional regulatory subunit. Interacts with BSG.

The protein resides in the cell membrane. This is the non-catalytic component of the active enzyme, which catalyzes the hydrolysis of ATP coupled with the exchange of Na(+) and K(+) ions across the plasma membrane. The exact function of the beta-2 subunit is not known. Functionally, mediates cell adhesion of neurons and astrocytes, and promotes neurite outgrowth. This is Sodium/potassium-transporting ATPase subunit beta-2 (ATP1B2) from Ochotona curzoniae (Black-lipped pika).